We begin with the raw amino-acid sequence, 243 residues long: Ubiquinone biosynthesis O-methyltransferase (243 aa).

Arg-45, Gly-65, Asp-86, and Leu-130 together coordinate S-adenosyl-L-methionine.

It belongs to the methyltransferase superfamily. UbiG/COQ3 family.

The enzyme catalyses a 3-demethylubiquinol + S-adenosyl-L-methionine = a ubiquinol + S-adenosyl-L-homocysteine + H(+). The catalysed reaction is a 3-(all-trans-polyprenyl)benzene-1,2-diol + S-adenosyl-L-methionine = a 2-methoxy-6-(all-trans-polyprenyl)phenol + S-adenosyl-L-homocysteine + H(+). Its pathway is cofactor biosynthesis; ubiquinone biosynthesis. In terms of biological role, O-methyltransferase that catalyzes the 2 O-methylation steps in the ubiquinone biosynthetic pathway. The sequence is that of Ubiquinone biosynthesis O-methyltransferase from Idiomarina loihiensis (strain ATCC BAA-735 / DSM 15497 / L2-TR).